A 275-amino-acid polypeptide reads, in one-letter code: Small ribosomal subunit protein uS3 (275 aa).

Residues 39 to 107 (VRIYLKKKLK…PVHVNIEEIR (69 aa)) enclose the KH type-2 domain. The disordered stretch occupies residues 216 to 275 (AAATSAEPAAEEKKTRRAPSKTAARKPAAGTDKPLVAAKPAVKRVRKVETPAADTQKSGE).

It belongs to the universal ribosomal protein uS3 family. In terms of assembly, part of the 30S ribosomal subunit. Forms a tight complex with proteins S10 and S14.

Its function is as follows. Binds the lower part of the 30S subunit head. Binds mRNA in the 70S ribosome, positioning it for translation. The polypeptide is Small ribosomal subunit protein uS3 (Polynucleobacter asymbioticus (strain DSM 18221 / CIP 109841 / QLW-P1DMWA-1) (Polynucleobacter necessarius subsp. asymbioticus)).